The chain runs to 156 residues: Ribosomal RNA large subunit methyltransferase H (156 aa).

S-adenosyl-L-methionine-binding positions include L72, G104, and 123 to 128; that span reads FGAMVW.

The protein belongs to the RNA methyltransferase RlmH family. As to quaternary structure, homodimer.

It is found in the cytoplasm. It catalyses the reaction pseudouridine(1915) in 23S rRNA + S-adenosyl-L-methionine = N(3)-methylpseudouridine(1915) in 23S rRNA + S-adenosyl-L-homocysteine + H(+). Its function is as follows. Specifically methylates the pseudouridine at position 1915 (m3Psi1915) in 23S rRNA. The sequence is that of Ribosomal RNA large subunit methyltransferase H from Dinoroseobacter shibae (strain DSM 16493 / NCIMB 14021 / DFL 12).